The sequence spans 119 residues: ATP-dependent Clp protease adapter protein ClpS (119 aa).

The tract at residues 1–33 (MATRIPKTPSTPPAQKPAGDDGDSVVLERRPQK) is disordered.

This sequence belongs to the ClpS family. In terms of assembly, binds to the N-terminal domain of the chaperone ClpA.

Its function is as follows. Involved in the modulation of the specificity of the ClpAP-mediated ATP-dependent protein degradation. This Variovorax paradoxus (strain S110) protein is ATP-dependent Clp protease adapter protein ClpS.